Reading from the N-terminus, the 271-residue chain is Tryptophan synthase alpha chain (271 aa).

Residues E49 and D60 each act as proton acceptor in the active site.

The protein belongs to the TrpA family. As to quaternary structure, tetramer of two alpha and two beta chains.

The enzyme catalyses (1S,2R)-1-C-(indol-3-yl)glycerol 3-phosphate + L-serine = D-glyceraldehyde 3-phosphate + L-tryptophan + H2O. It participates in amino-acid biosynthesis; L-tryptophan biosynthesis; L-tryptophan from chorismate: step 5/5. In terms of biological role, the alpha subunit is responsible for the aldol cleavage of indoleglycerol phosphate to indole and glyceraldehyde 3-phosphate. The chain is Tryptophan synthase alpha chain from Burkholderia cenocepacia (strain ATCC BAA-245 / DSM 16553 / LMG 16656 / NCTC 13227 / J2315 / CF5610) (Burkholderia cepacia (strain J2315)).